Reading from the N-terminus, the 297-residue chain is 4-hydroxy-tetrahydrodipicolinate synthase (297 aa).

Threonine 50 lines the pyruvate pocket. Tyrosine 139 functions as the Proton donor/acceptor in the catalytic mechanism. The active-site Schiff-base intermediate with substrate is lysine 167. Valine 209 is a pyruvate binding site.

The protein belongs to the DapA family. In terms of assembly, homotetramer; dimer of dimers.

The protein resides in the cytoplasm. The catalysed reaction is L-aspartate 4-semialdehyde + pyruvate = (2S,4S)-4-hydroxy-2,3,4,5-tetrahydrodipicolinate + H2O + H(+). It functions in the pathway amino-acid biosynthesis; L-lysine biosynthesis via DAP pathway; (S)-tetrahydrodipicolinate from L-aspartate: step 3/4. Functionally, catalyzes the condensation of (S)-aspartate-beta-semialdehyde [(S)-ASA] and pyruvate to 4-hydroxy-tetrahydrodipicolinate (HTPA). The polypeptide is 4-hydroxy-tetrahydrodipicolinate synthase (Microcystis aeruginosa (strain NIES-843 / IAM M-2473)).